Consider the following 352-residue polypeptide: Phosphoribosylformylglycinamidine cyclo-ligase (352 aa).

It belongs to the AIR synthase family.

It is found in the cytoplasm. It catalyses the reaction 2-formamido-N(1)-(5-O-phospho-beta-D-ribosyl)acetamidine + ATP = 5-amino-1-(5-phospho-beta-D-ribosyl)imidazole + ADP + phosphate + H(+). It functions in the pathway purine metabolism; IMP biosynthesis via de novo pathway; 5-amino-1-(5-phospho-D-ribosyl)imidazole from N(2)-formyl-N(1)-(5-phospho-D-ribosyl)glycinamide: step 2/2. The protein is Phosphoribosylformylglycinamidine cyclo-ligase of Nitrosospira multiformis (strain ATCC 25196 / NCIMB 11849 / C 71).